The chain runs to 411 residues: 2,3-bisphosphoglycerate-independent phosphoglycerate mutase (411 aa).

This sequence belongs to the BPG-independent phosphoglycerate mutase family. A-PGAM subfamily.

It catalyses the reaction (2R)-2-phosphoglycerate = (2R)-3-phosphoglycerate. It functions in the pathway carbohydrate degradation; glycolysis; pyruvate from D-glyceraldehyde 3-phosphate: step 3/5. Its function is as follows. Catalyzes the interconversion of 2-phosphoglycerate and 3-phosphoglycerate. This is 2,3-bisphosphoglycerate-independent phosphoglycerate mutase from Pyrobaculum islandicum (strain DSM 4184 / JCM 9189 / GEO3).